Here is a 188-residue protein sequence, read N- to C-terminus: Actin-related protein 2/3 complex subunit 3 (188 aa).

The protein belongs to the ARPC3 family. In terms of assembly, component of the Arp2/3 complex.

The protein localises to the cytoplasm. The protein resides in the cytoskeleton. Its function is as follows. Functions as a component of the Arp2/3 complex which is involved in regulation of actin polymerization and together with an activating nucleation-promoting factor (NPF) mediates the formation of branched actin networks. This is Actin-related protein 2/3 complex subunit 3 from Entamoeba histolytica (strain ATCC 30459 / HM-1:IMSS / ABRM).